Reading from the N-terminus, the 1106-residue chain is Solute carrier family 12 member 7 (1106 aa).

The Cytoplasmic portion of the chain corresponds to Met1–Gly143. The segment at Gly17 to Asp83 is disordered. Ser74 and Ser86 each carry phosphoserine. The discontinuously helical transmembrane segment at Thr144 to Thr166 threads the bilayer. Asn155 and Ile156 together coordinate K(+). Val159 provides a ligand contact to chloride. Over Trp167–Gly173 the chain is Extracellular. Residues Val174–Ser196 traverse the membrane as a helical segment. Topologically, residues Ala197–Glu220 are cytoplasmic. Residues Phe221–Leu249 form a helical membrane-spanning segment. Residues Thr250–His273 are Extracellular-facing. Transmembrane regions (helical) follow at residues Asn274–Lys295 and Tyr296–Phe324. Residues Asp325–Tyr443 lie on the Extracellular side of the membrane. Asn336, Asn355, and Asn384 each carry an N-linked (GlcNAc...) asparagine glycan. Residues Phe444–Arg464 form a helical membrane-spanning segment. K(+) is bound by residues Pro453 and Thr456. Chloride is bound at residue Pro453. The chloride site is built by Gly457 and Ile458. The Cytoplasmic segment spans residues Ser465 to Ser474. Residues Ile475 to Phe497 traverse the membrane as a helical segment. Topologically, residues Gly498–Pro528 are extracellular. The chain crosses the membrane as a helical span at residues Trp529 to Gln555. Topologically, residues Ala556 to Pro578 are cytoplasmic. Helical transmembrane passes span Thr579 to Ser597 and Leu598 to Val622. Residue Tyr613 coordinates chloride. Topologically, residues Gln623–Lys636 are cytoplasmic. 2 consecutive transmembrane segments (helical) span residues Tyr637 to Trp659 and Tyr660 to Tyr675. Residues Ile676–Ser1106 lie on the Cytoplasmic side of the membrane. Residues Gly688–Val704 form a scissor helix region. Residues Arg980–Lys999 are disordered. A phosphothreonine mark is found at Thr996 and Thr1003.

It belongs to the SLC12A transporter family. K/Cl co-transporter subfamily. As to quaternary structure, homodimer; adopts a domain-swap conformation at the scissor helices connecting the transmembrane domain and C-terminal domain. Heterodimer with K-Cl cotransporter SLC12A5. In terms of tissue distribution, widely expressed. Higher levels in heart, kidney and lung (at protein level).

The protein localises to the cell membrane. The catalysed reaction is K(+)(in) + chloride(in) = K(+)(out) + chloride(out). Its activity is regulated as follows. Activated by N-ethylmaleimide (NEM). Inhibited by furosemide, DIDS and bumetanide. The inhibition is much stronger in the presence of 50 mM K(+) in the uptake medium. Inhibited by DIOA. Inhibited by WNK3. Mediates electroneutral potassium-chloride cotransport when activated by cell swelling. May mediate K(+) uptake into Deiters' cells in the cochlea and contribute to K(+) recycling in the inner ear. Important for the survival of cochlear outer and inner hair cells and the maintenance of the organ of Corti. May be required for basolateral Cl(-) extrusion in the kidney and contribute to renal acidification. The polypeptide is Solute carrier family 12 member 7 (Oryctolagus cuniculus (Rabbit)).